A 526-amino-acid polypeptide reads, in one-letter code: Trigger factor (526 aa).

In terms of domain architecture, PPIase FKBP-type spans 162–243 (GDFVSIDLSA…LGSVKERELP (82 aa)). Residues 425–460 (DTDGADVDPKEYFGDVEAEGDKADKAETDKAEEKPK) show a composition bias toward basic and acidic residues. Residues 425–526 (DTDGADVDPK…AKKAAEKKED (102 aa)) are disordered. Basic residues predominate over residues 461–517 (KAPAKKSTTKKSTAKKSTAKKSTAKKSTAKKSTAKKSTTKKATKSTAKKSTAKKTTA).

The protein belongs to the FKBP-type PPIase family. Tig subfamily.

The protein resides in the cytoplasm. It carries out the reaction [protein]-peptidylproline (omega=180) = [protein]-peptidylproline (omega=0). Its function is as follows. Involved in protein export. Acts as a chaperone by maintaining the newly synthesized protein in an open conformation. Functions as a peptidyl-prolyl cis-trans isomerase. The protein is Trigger factor of Corynebacterium jeikeium (strain K411).